We begin with the raw amino-acid sequence, 486 residues long: Cardiolipin synthase A (486 aa).

2 helical membrane passes run 3-23 and 38-58; these read TFYTVISWLLVFGYWLLIAGV and MAWLLVIYILPLVGIVAYLSF. PLD phosphodiesterase domains lie at 219 to 246 and 399 to 426; these read MDLRQHRKIILIDNRIAYTGSMNMVDPR and KDGLLHTKSVLVDGQLSLVGTVNLDMRS. Residues His-224, Lys-226, Asp-231, His-404, Lys-406, and Asp-411 contribute to the active site.

The protein belongs to the phospholipase D family. Cardiolipin synthase subfamily. ClsA sub-subfamily.

The protein resides in the cell inner membrane. It carries out the reaction 2 a 1,2-diacyl-sn-glycero-3-phospho-(1'-sn-glycerol) = a cardiolipin + glycerol. In terms of biological role, catalyzes the reversible phosphatidyl group transfer from one phosphatidylglycerol molecule to another to form cardiolipin (CL) (diphosphatidylglycerol) and glycerol. This chain is Cardiolipin synthase A, found in Pectobacterium carotovorum subsp. carotovorum (strain PC1).